Reading from the N-terminus, the 430-residue chain is Histidinol dehydrogenase (430 aa).

Residues Y130, Q191, and N214 each coordinate NAD(+). Positions 237, 259, and 262 each coordinate substrate. Q259 and H262 together coordinate Zn(2+). Active-site proton acceptor residues include E327 and H328. Substrate is bound by residues H328, D361, E415, and H420. Zn(2+) is bound at residue D361. H420 contributes to the Zn(2+) binding site.

Belongs to the histidinol dehydrogenase family. Zn(2+) serves as cofactor.

The catalysed reaction is L-histidinol + 2 NAD(+) + H2O = L-histidine + 2 NADH + 3 H(+). The protein operates within amino-acid biosynthesis; L-histidine biosynthesis; L-histidine from 5-phospho-alpha-D-ribose 1-diphosphate: step 9/9. Functionally, catalyzes the sequential NAD-dependent oxidations of L-histidinol to L-histidinaldehyde and then to L-histidine. The sequence is that of Histidinol dehydrogenase from Brucella abortus (strain 2308).